A 485-amino-acid polypeptide reads, in one-letter code: GTPase Obg (485 aa).

Residues S2–V159 form the Obg domain. The segment at P64–G84 is disordered. The region spanning A160–R340 is the OBG-type G domain. Residues G166–S173, F191–V195, D212–G215, N292–D295, and S321–V323 each bind GTP. S173 and T193 together coordinate Mg(2+). In terms of domain architecture, OCT spans P358–P438. Residues L457–K469 are compositionally biased toward basic and acidic residues. The tract at residues L457–R485 is disordered.

The protein belongs to the TRAFAC class OBG-HflX-like GTPase superfamily. OBG GTPase family. Monomer. It depends on Mg(2+) as a cofactor.

Its subcellular location is the cytoplasm. In terms of biological role, an essential GTPase which binds GTP, GDP and possibly (p)ppGpp with moderate affinity, with high nucleotide exchange rates and a fairly low GTP hydrolysis rate. Plays a role in control of the cell cycle, stress response, ribosome biogenesis and in those bacteria that undergo differentiation, in morphogenesis control. The polypeptide is GTPase Obg (Nocardia farcinica (strain IFM 10152)).